The primary structure comprises 255 residues: Hydroxyacylglutathione hydrolase (255 aa).

Zn(2+) contacts are provided by His53, His55, Asp57, His58, His110, Asp127, and His165.

The protein belongs to the metallo-beta-lactamase superfamily. Glyoxalase II family. As to quaternary structure, monomer. Zn(2+) serves as cofactor.

The enzyme catalyses an S-(2-hydroxyacyl)glutathione + H2O = a 2-hydroxy carboxylate + glutathione + H(+). Its pathway is secondary metabolite metabolism; methylglyoxal degradation; (R)-lactate from methylglyoxal: step 2/2. In terms of biological role, thiolesterase that catalyzes the hydrolysis of S-D-lactoyl-glutathione to form glutathione and D-lactic acid. This is Hydroxyacylglutathione hydrolase from Xanthomonas axonopodis pv. citri (strain 306).